Reading from the N-terminus, the 262-residue chain is Vibriobactin-specific 2,3-dihydro-2,3-dihydroxybenzoate dehydrogenase (262 aa).

NAD(+) is bound at residue 12 to 36; that stretch reads LLVGSARGIGFSVLEHLLQAGAQVM. Ser-145 is a substrate binding site. Catalysis depends on Tyr-158, which acts as the Proton acceptor.

This sequence belongs to the short-chain dehydrogenases/reductases (SDR) family.

It carries out the reaction (2S,3S)-2,3-dihydroxy-2,3-dihydrobenzoate + NAD(+) = 2,3-dihydroxybenzoate + NADH + H(+). It functions in the pathway siderophore biosynthesis; vibriobactin biosynthesis. Functionally, involved in an early step of the biosynthesis of the catechol siderophore vibriobactin. Vibriobactin is a chelating compound involved in transporting iron from the bacterial environment into the cell cytoplasm. In Vibrio cholerae serotype O1 (strain ATCC 39315 / El Tor Inaba N16961), this protein is Vibriobactin-specific 2,3-dihydro-2,3-dihydroxybenzoate dehydrogenase (vibA).